A 948-amino-acid chain; its full sequence is MLTPDNKLMSETETAWERYKEVVESITLTAEQEQILRALFAVSPFIGRVAESYPEHLVTDFFDGSGSSVRLIDADSYGDRIAESLSQVTNEDEAKKCLRRLRHCWMAKLAAADILQQVSLKESLHHYSTFADAAINKSLEWLFERFVQRHGKPLDANDQLMPMLVIGMGKLGGKELNFSSDIDLIFAFPEQGETQGPGRNLEHGVFYKRLAQSLIGLLDETTADGQVFRVDMRLRPFGQSGPLVTSLNALEHYYQEQGRDWERYAMVKARMIGADEQYEQAFQQLIRPFVYRRYIDFGAIEALRKMKLLITQETRRQGVKNNIKLGAGGIREVEFIVQAHQLIRGGQEKSLQTRSVYIAMNGLVELDLIDPEHARQLLKDYEYLRVIEHRLQQIDDQQTQQLPTDETGRMRLCAMLNEPEWETLQRKIDECMERIHAEFQQVVGAESEDDEDEQGLQVLWQDMLDDDAALEIIESEGVDEPQALWTLIKNFRQESRRRSSGPRGRSALARLMPIMLRHAIQHQHPERLLERLLSIIKAVMSRTAYIELLAENPGAREQLCKLCMASPWISEQLALHPILLDELIDPQQLYSLPESKDYAAVLREYLMRIPEQDLETQMDALRQAKQALQLKIAAADISGVLELMNVSDHLSALAEAIISEVVGLAWQHLTQKHGKPAGTCLDNTGFAVLGYGKLGGQELGYGSDLDLVFVTDANYQGQTDGQRPIEVQQFYLRLAQRILHLFTTRTVAGILYDVDLRLRPSGQAGLLVTQVNSFARYLRDDAWTWELQALVRARPVYGVPALRDTVMDIRRSVLSQKRDEQELRQSIVKMREKMREHLTQRNSRKFDLKQDPGGIADIEFITQYLVLRYAHKYPELCKYSDNVRLLTEAQQLHLLTEVDAQNLINAFQIFRCESHSLALQGEQLLEEHNLDNERQAVLNCWNHLLEDD.

The interval 1–447 (MLTPDNKLMS…EFQQVVGAES (447 aa)) is adenylyl removase. An adenylyl transferase region spans residues 453 to 948 (EQGLQVLWQD…NCWNHLLEDD (496 aa)).

This sequence belongs to the GlnE family. Mg(2+) is required as a cofactor.

The catalysed reaction is [glutamine synthetase]-O(4)-(5'-adenylyl)-L-tyrosine + phosphate = [glutamine synthetase]-L-tyrosine + ADP. The enzyme catalyses [glutamine synthetase]-L-tyrosine + ATP = [glutamine synthetase]-O(4)-(5'-adenylyl)-L-tyrosine + diphosphate. In terms of biological role, involved in the regulation of glutamine synthetase GlnA, a key enzyme in the process to assimilate ammonia. When cellular nitrogen levels are high, the C-terminal adenylyl transferase (AT) inactivates GlnA by covalent transfer of an adenylyl group from ATP to specific tyrosine residue of GlnA, thus reducing its activity. Conversely, when nitrogen levels are low, the N-terminal adenylyl removase (AR) activates GlnA by removing the adenylyl group by phosphorolysis, increasing its activity. The regulatory region of GlnE binds the signal transduction protein PII (GlnB) which indicates the nitrogen status of the cell. This chain is Bifunctional glutamine synthetase adenylyltransferase/adenylyl-removing enzyme, found in Idiomarina loihiensis (strain ATCC BAA-735 / DSM 15497 / L2-TR).